We begin with the raw amino-acid sequence, 308 residues long: ATP synthase gamma chain (308 aa).

This sequence belongs to the ATPase gamma chain family. As to quaternary structure, F-type ATPases have 2 components, CF(1) - the catalytic core - and CF(0) - the membrane proton channel. CF(1) has five subunits: alpha(3), beta(3), gamma(1), delta(1), epsilon(1). CF(0) has three main subunits: a, b and c.

It is found in the cell membrane. In terms of biological role, produces ATP from ADP in the presence of a proton gradient across the membrane. The gamma chain is believed to be important in regulating ATPase activity and the flow of protons through the CF(0) complex. This Saccharopolyspora erythraea (strain ATCC 11635 / DSM 40517 / JCM 4748 / NBRC 13426 / NCIMB 8594 / NRRL 2338) protein is ATP synthase gamma chain.